Here is a 393-residue protein sequence, read N- to C-terminus: GDP-mannose:cellobiosyl-diphosphopolyprenol alpha-mannosyltransferase (393 aa).

It belongs to the glycosyltransferase group 1 family. Glycosyltransferase 4 subfamily.

It carries out the reaction beta-D-Glc-(1-&gt;4)-alpha-D-Glc-di-trans,octa-cis-undecaprenyl diphosphate + GDP-alpha-D-mannose = alpha-D-Man-(1-&gt;3)-beta-D-Glc-(1-&gt;4)-alpha-D-Glc-1-di-trans,octa-cis-undecaprenyl diphosphate + GDP + H(+). Functionally, involved in the biosynthesis of the exopolysaccharide acetan, a water-soluble polysaccharide involved in production of bacterial cellulose (BC). The polypeptide is GDP-mannose:cellobiosyl-diphosphopolyprenol alpha-mannosyltransferase (aceC) (Komagataeibacter xylinus (Gluconacetobacter xylinus)).